We begin with the raw amino-acid sequence, 525 residues long: Peptide chain release factor 3 (525 aa).

The tr-type G domain maps to 9–276 (AKRRTFAIIS…GFTTYAPEPQ (268 aa)). GTP-binding positions include 18–25 (SHPDAGKT), 86–90 (DTPGH), and 140–143 (NKFD).

Belongs to the TRAFAC class translation factor GTPase superfamily. Classic translation factor GTPase family. PrfC subfamily.

It localises to the cytoplasm. Increases the formation of ribosomal termination complexes and stimulates activities of RF-1 and RF-2. It binds guanine nucleotides and has strong preference for UGA stop codons. It may interact directly with the ribosome. The stimulation of RF-1 and RF-2 is significantly reduced by GTP and GDP, but not by GMP. This chain is Peptide chain release factor 3, found in Francisella philomiragia subsp. philomiragia (strain ATCC 25017 / CCUG 19701 / FSC 153 / O#319-036).